The chain runs to 342 residues: Ribosomal RNA small subunit methyltransferase H (342 aa).

S-adenosyl-L-methionine-binding positions include 42–44 (GGH), Asp-61, Phe-88, Asp-119, and Gln-126.

This sequence belongs to the methyltransferase superfamily. RsmH family.

The protein resides in the cytoplasm. The catalysed reaction is cytidine(1402) in 16S rRNA + S-adenosyl-L-methionine = N(4)-methylcytidine(1402) in 16S rRNA + S-adenosyl-L-homocysteine + H(+). In terms of biological role, specifically methylates the N4 position of cytidine in position 1402 (C1402) of 16S rRNA. The chain is Ribosomal RNA small subunit methyltransferase H from Corynebacterium jeikeium (strain K411).